The primary structure comprises 402 residues: MAAFNFEAFSLTPQGSTISAAPRPAAPAIDRTVQQQCGSFGYGNRAFQFDFASLESLPEDANPGLTEVLTAKYWNHFSIQLGHWNTLKVIVLDAQMFSIMPDHTKKGVLNTMKSYLGGADAMYARDADNGQVVILAPRRLMESNITIVGSTTVWDPKKRHVQATAEAKIPRPPNAYILYRKDQQAALKAANPGIPNNDISVMTGGMWKKESPEVRAEYQRRASEIKAKLMSAHPHYRYVPRRSSEIRRRAPRRNRAQEVANASPIGENSGAPIVGNPIVTTMEQQQPLPDISIAPNQEITKDNDVSHLIDPPHVFSGQITELMPDVANFLPPMIREGWSPLHDFRAVLNGHTGNNGVDCALTPESESQDDFVGTPSSTMPDNSAFDWITGTEEDLAQIFGQF.

The HMG box DNA-binding region spans 169–237; that stretch reads IPRPPNAYIL…KLMSAHPHYR (69 aa). The tract at residues 246-272 is disordered; it reads IRRRAPRRNRAQEVANASPIGENSGAP.

It is found in the nucleus. Its function is as follows. Controls fertilization, probably by determining the mating type. The chain is MAT+ sexual cell fertilization-promoting factor (FPR1) from Podospora anserina (Pleurage anserina).